The sequence spans 263 residues: UPF0758 protein NGR_c13970 (263 aa).

The MPN domain occupies 141–263 (VLSSWSAVID…HVSMKGLRLF (123 aa)). Positions 212, 214, and 225 each coordinate Zn(2+). Residues 212–225 (HNHPSGDPTPSRAD) carry the JAMM motif motif.

Belongs to the UPF0758 family.

This Sinorhizobium fredii (strain NBRC 101917 / NGR234) protein is UPF0758 protein NGR_c13970.